A 534-amino-acid chain; its full sequence is Serine/threonine-protein kinase NLK (534 aa).

2 sufficient for interaction with DAPK3 regions span residues 8–132 (LVSC…KAHH) and 131–423 (HHHQ…SKRI). Required for interaction with TAB2 stretches follow at residues 8 to 311 (LVSC…VVTQ) and 441 to 534 (YHTC…LVWE). Disordered stretches follow at residues 29-79 (AAAA…SSAA) and 97-147 (QQPY…DIEP). The span at 33–61 (GHHHHHHHHLPHLPPPHLHHHHHPQHHLH) shows a compositional bias: basic residues. The segment covering 110-126 (PGPAAAAPAQVQAAAAA) has biased composition (low complexity). Basic residues predominate over residues 129–138 (KAHHHQHSHH). The Protein kinase domain occupies 145–434 (IEPDRPIGYG…AKDALAHPYL (290 aa)). ATP-binding positions include 151 to 159 (IGYGAFGVV) and K174. The active-site Proton acceptor is D271. T305 bears the Phosphothreonine; by autocatalysis mark. The TQE signature appears at 305–307 (TQE). The required for homodimerization and kinase activation and localization to the nucleus stretch occupies residues 435-534 (DEGRLRYHTC…EMPPSPLVWE (100 aa)). Position 529 is a phosphoserine (S529).

This sequence belongs to the protein kinase superfamily. CMGC Ser/Thr protein kinase family. MAP kinase subfamily. Homodimer. Homodimerization is required for intermolecular autophosphorylation, kinase activation and nuclear localization. May interact with components of cullin-RING-based SCF (SKP1-CUL1-F-box protein) E3 ubiquitin-protein ligase complexes. Interacts with LEF1, MEF2A, MYBL1 and MYBL2. Interacts with the upstream activating kinases HIPK2 and MAP3K7/TAK1. Interaction with MAP3K7/TAK1 seems to be indirect, and may be mediated by other proteins such as STAT3, TAB1 and TAB2. Interacts with and phosphorylates a number of transcription factors including FOXO1, FOXO3, FOXO4, MYB, NOTCH1 and TCF7L2/TCF4. Interacts with DAPK3/ZIPK, and this interaction may disrupt interaction with transcription factors such as TCF7L2/TCF4. Forms a transcriptional repressor complex with CHD7, PPARG and SETDB1. Interacts with RNF138/NARF. Interacts with ATF5; the interaction stabilizes ATF5 at the protein level in a kinase-independent manner. Mg(2+) serves as cofactor. Post-translationally, phosphorylated on Thr-305. Intermolecular autophosphorylation on Thr-305 activates the enzyme.

The protein localises to the nucleus. The protein resides in the cytoplasm. The enzyme catalyses L-seryl-[protein] + ATP = O-phospho-L-seryl-[protein] + ADP + H(+). The catalysed reaction is L-threonyl-[protein] + ATP = O-phospho-L-threonyl-[protein] + ADP + H(+). With respect to regulation, activated by the non-canonical Wnt signaling pathway, in which WNT5A leads to activation of MAP3K7/TAK1 and HIPK2, which subsequently phosphorylates and activates this protein. Activated by dimerization and subsequent intermolecular autophosphorylation on Thr-305. Other cytokines such as IL6 may also activate this regulatory circuit. Its function is as follows. Serine/threonine-protein kinase that regulates a number of transcription factors with key roles in cell fate determination. Positive effector of the non-canonical Wnt signaling pathway, acting downstream of WNT5A, MAP3K7/TAK1 and HIPK2. Negative regulator of the canonical Wnt/beta-catenin signaling pathway. Binds to and phosphorylates TCF7L2/TCF4 and LEF1, promoting the dissociation of the TCF7L2/LEF1/beta-catenin complex from DNA, as well as the ubiquitination and subsequent proteolysis of LEF1. Together these effects inhibit the transcriptional activation of canonical Wnt/beta-catenin target genes. Negative regulator of the Notch signaling pathway. Binds to and phosphorylates NOTCH1, thereby preventing the formation of a transcriptionally active ternary complex of NOTCH1, RBPJ/RBPSUH and MAML1. Negative regulator of the MYB family of transcription factors. Phosphorylation of MYB leads to its subsequent proteolysis while phosphorylation of MYBL1 and MYBL2 inhibits their interaction with the coactivator CREBBP. Other transcription factors may also be inhibited by direct phosphorylation of CREBBP itself. Acts downstream of IL6 and MAP3K7/TAK1 to phosphorylate STAT3, which is in turn required for activation of NLK by MAP3K7/TAK1. Upon IL1B stimulus, cooperates with ATF5 to activate the transactivation activity of C/EBP subfamily members. Phosphorylates ATF5 but also stabilizes ATF5 protein levels in a kinase-independent manner. Acts as an inhibitor of the mTORC1 complex in response to osmotic stress by mediating phosphorylation of RPTOR, thereby preventing recruitment of the mTORC1 complex to lysosomes. This chain is Serine/threonine-protein kinase NLK (NLK), found in Bos taurus (Bovine).